Here is a 151-residue protein sequence, read N- to C-terminus: Small ribosomal subunit protein uS15 (151 aa).

This sequence belongs to the universal ribosomal protein uS15 family.

This chain is Small ribosomal subunit protein uS15 (RPS13), found in Candida maltosa (Yeast).